Reading from the N-terminus, the 69-residue chain is uncharacterized protein (69 aa).

4Fe-4S ferredoxin-type domains are found at residues 2–30 and 38–67; these read KIEINENFCKGCDICIVVCPRGVFEKSKK and PPIPVNPEKCTKCNLCILQCPDQAISIELS. 8 residues coordinate [4Fe-4S] cluster: C10, C13, C16, C20, C47, C50, C53, and C57.

[4Fe-4S] cluster serves as cofactor.

This is an uncharacterized protein from Methanocaldococcus jannaschii (strain ATCC 43067 / DSM 2661 / JAL-1 / JCM 10045 / NBRC 100440) (Methanococcus jannaschii).